A 72-amino-acid chain; its full sequence is Translation initiation factor IF-1 (72 aa).

The 72-residue stretch at 1–72 folds into the S1-like domain; the sequence is MAKDNVIEIE…SKGRITYRFK (72 aa).

It belongs to the IF-1 family. In terms of assembly, component of the 30S ribosomal translation pre-initiation complex which assembles on the 30S ribosome in the order IF-2 and IF-3, IF-1 and N-formylmethionyl-tRNA(fMet); mRNA recruitment can occur at any time during PIC assembly.

It is found in the cytoplasm. One of the essential components for the initiation of protein synthesis. Stabilizes the binding of IF-2 and IF-3 on the 30S subunit to which N-formylmethionyl-tRNA(fMet) subsequently binds. Helps modulate mRNA selection, yielding the 30S pre-initiation complex (PIC). Upon addition of the 50S ribosomal subunit IF-1, IF-2 and IF-3 are released leaving the mature 70S translation initiation complex. The sequence is that of Translation initiation factor IF-1 from Pediococcus pentosaceus (strain ATCC 25745 / CCUG 21536 / LMG 10740 / 183-1w).